The following is a 63-amino-acid chain: Large ribosomal subunit protein uL29 (63 aa).

It belongs to the universal ribosomal protein uL29 family.

This chain is Large ribosomal subunit protein uL29, found in Shewanella loihica (strain ATCC BAA-1088 / PV-4).